The following is a 716-amino-acid chain: DNA replication licensing factor MCM7 (716 aa).

The segment at 178 to 205 adopts a C4-type zinc-finger fold; sequence CEDCGHEIYQEVTSRVFMPLFKCPSSRC. Positions 326–531 constitute an MCM domain; sequence IYNKLSRSLA…MDSDLELAKH (206 aa). Residue 376 to 383 coordinates ATP; sequence GDPGVAKS. The Arginine finger motif lies at 508–511; the sequence is SRFD.

This sequence belongs to the MCM family. As to quaternary structure, component of the minichromosome maintenance (MCM) complex, a heterotetramer composed of MCM2, MCM3, MCM4, MCM5, MCM6 and MCM7. Interacts with ETG1. In terms of tissue distribution, expressed in shoot apex and flower buds.

The protein resides in the nucleus. It is found in the cytoplasm. The enzyme catalyses ATP + H2O = ADP + phosphate + H(+). In terms of biological role, probable component of the MCM2-7 complex (MCM complex) that may function as a DNA helicase and which is essential to undergo a single round of replication initiation and elongation per cell cycle in eukaryotic cells. Required for megagametophyte and embryo development. The chain is DNA replication licensing factor MCM7 (MCM7) from Arabidopsis thaliana (Mouse-ear cress).